Here is a 287-residue protein sequence, read N- to C-terminus: Transcription initiation factor IIB 1 (287 aa).

The TFIIB-type zinc finger occupies 3–31 (HPHRCPECDGTIRETDTEHVCADCGLVVT). Zn(2+) is bound by residues Cys7, Cys10, Cys23, and Cys26. Residues 40–53 (EWRTFSDDPDHAPE) show a composition bias toward basic and acidic residues. Residues 40 to 63 (EWRTFSDDPDHAPERTGAPLTRSR) form a disordered region. 2 tandem repeats follow at residues 111–194 (TEIR…NRDL) and 205–286 (EYLP…NLTD).

This sequence belongs to the TFIIB family.

Its function is as follows. Stabilizes TBP binding to an archaeal box-A promoter. Also responsible for recruiting RNA polymerase II to the pre-initiation complex (DNA-TBP-TFIIB). In Halobacterium salinarum (strain ATCC 700922 / JCM 11081 / NRC-1) (Halobacterium halobium), this protein is Transcription initiation factor IIB 1.